The sequence spans 280 residues: Mevalonyl-coenzyme A hydratase SIDH (280 aa).

The PTS1-type peroxisomal targeting signal signature appears at 278–280; sequence SKL.

It belongs to the enoyl-CoA hydratase/isomerase family.

Its subcellular location is the peroxisome. It functions in the pathway siderophore biosynthesis. Its function is as follows. Mevalonyl-coenzyme A hydratase; part of the gene cluster that mediates the biosynthesis of at least 11 siderophores, including beauverichelin A, dimerumic acid (DA), Na-dimethyl coprogen (NADC), eleutherazine B, ferricrocin (FC), fusarinine A, fusarinine C (FsC), metachelin A, mevalonolactone, rhodotorulic acid (RA) and tenellin. This cocktail of siderophores for iron metabolism is essential for virulence, and more specifically for the fungal virulence in penetrating through the host cuticle. Siderophore synthesis is also involved in conidial germination under iron-deficient conditions. For biosynthesis of fusarinine C, the transacylase SIDF transfers anhydromevalonyl to N(5)-hydroxyornithine. The required anhydromevalonyl-CoA moiety is derived from mevalonate by CoA ligation and dehydration catalyzed by SIDI and sidH respectively. SIDH is not essential for siderophore production, probably due to functional redundancy of this protein family, as there are 15 homologs of SIDH in B.bassiana. The chain is Mevalonyl-coenzyme A hydratase SIDH from Beauveria bassiana (strain ARSEF 2860) (White muscardine disease fungus).